The following is a 296-amino-acid chain: GTPase Era (296 aa).

An Era-type G domain is found at 3-170 (KSGFVTIVGR…KELMFKYIPE (168 aa)). Residues 11–18 (GRPNVGKS) form a G1 region. GTP is bound at residue 11–18 (GRPNVGKS). The segment at 37–41 (QTTRN) is G2. A G3 region spans residues 58–61 (DTPG). GTP-binding positions include 58–62 (DTPGI) and 120–123 (NKID). The G4 stretch occupies residues 120-123 (NKID). The tract at residues 149 to 151 (ISA) is G5. The KH type-2 domain maps to 201-278 (LSEEVPHGIA…YIRLWVKVKE (78 aa)).

Belongs to the TRAFAC class TrmE-Era-EngA-EngB-Septin-like GTPase superfamily. Era GTPase family. Monomer.

Its subcellular location is the cytoplasm. It localises to the cell membrane. Functionally, an essential GTPase that binds both GDP and GTP, with rapid nucleotide exchange. Plays a role in 16S rRNA processing and 30S ribosomal subunit biogenesis and possibly also in cell cycle regulation and energy metabolism. The polypeptide is GTPase Era (Clostridium botulinum (strain 657 / Type Ba4)).